A 150-amino-acid chain; its full sequence is MEKKIAVTAGTFDLLHPGHFNTLNFAKKHADELVVIIARDETVKKIKGRSPVIPEEQRKVMIEALKPVDRAVLGSLTNKLEPILEIRPDVIILGPDQTTYQINELKSQLAKHFLYPEILKVEEYVKCPFHSSYDILKEIVRRWCCKELKV.

Residues Thr11 to Phe12, His16 to His19, Asp96, and Tyr124 contribute to the ATP site.

It belongs to the archaeal FAD synthase family. In terms of assembly, homodimer. The cofactor is a divalent metal cation.

It carries out the reaction FMN + ATP + H(+) = FAD + diphosphate. Its pathway is cofactor biosynthesis; FAD biosynthesis; FAD from FMN: step 1/1. Functionally, catalyzes the transfer of the AMP portion of ATP to flavin mononucleotide (FMN) to produce flavin adenine dinucleotide (FAD) coenzyme. The sequence is that of FAD synthase from Methanococcus maripaludis (strain C5 / ATCC BAA-1333).